Consider the following 121-residue polypeptide: Tachykinin-3 (121 aa).

A signal peptide spans 1 to 16 (MRIMLLFTAILAFSLA). Residues 17-78 (QSFGAVCKEP…TDPKESTSPE (62 aa)) constitute a propeptide that is removed on maturation. The residue at position 90 (methionine 90) is a Methionine amide. The segment at 93 to 121 (RSVQPDSPTDVNQENVPSFGILKYPPRAE) is disordered. Positions 94 to 121 (SVQPDSPTDVNQENVPSFGILKYPPRAE) are excised as a propeptide. Positions 96-108 (QPDSPTDVNQENV) are enriched in polar residues.

This sequence belongs to the tachykinin family.

It localises to the secreted. Its function is as follows. Tachykinins are active peptides which excite neurons, evoke behavioral responses, are potent vasodilators and secretagogues, and contract (directly or indirectly) many smooth muscles. Is a critical central regulator of gonadal function. The sequence is that of Tachykinin-3 (TAC3) from Homo sapiens (Human).